Here is a 465-residue protein sequence, read N- to C-terminus: Endo-1,3-1,4-beta-glycanase ExsH (465 aa).

3 Hemolysin-type calcium-binding repeats span residues 33-50, 105-122, and 123-140; these read HGTAGNDSMWGDSSVNVT, FGNEADNIIKGGSGTQTI, and DGRGGNDVLIGAGGADTF. The 257-residue stretch at 206–462 folds into the GH16 domain; it reads AHQFRLSLDR…YIKAYSLDAD (257 aa). E349 serves as the catalytic Nucleophile. The active-site Proton donor is the E354.

Belongs to the glycosyl hydrolase 16 family.

The protein resides in the secreted. Its pathway is glycan metabolism; exopolysaccharide biosynthesis. Cleaves high molecular weight succinoglycan to yield LMW succinoglycan. Dynamically regulates the molecular weight distribution of succinoglycan by cleaving nascent succinoglycan only during a limited period after its synthesis, perhaps before it undergoes a time-dependent change in its conformation or aggregation state. This Rhizobium meliloti (strain 1021) (Ensifer meliloti) protein is Endo-1,3-1,4-beta-glycanase ExsH (exsH).